The chain runs to 206 residues: Pyridoxine/pyridoxamine 5'-phosphate oxidase (206 aa).

FMN is bound by residues 53 to 58 (RMVLLK), 68 to 69 (YT), Lys75, and Gln97. Lys58 lines the substrate pocket. Tyr115, Arg119, and Ser123 together coordinate substrate. Residues 132–133 (QS) and Trp177 each bind FMN. 183 to 185 (RLH) contributes to the substrate binding site. Position 187 (Arg187) interacts with FMN.

Belongs to the pyridoxamine 5'-phosphate oxidase family. Homodimer. FMN is required as a cofactor.

It catalyses the reaction pyridoxamine 5'-phosphate + O2 + H2O = pyridoxal 5'-phosphate + H2O2 + NH4(+). The enzyme catalyses pyridoxine 5'-phosphate + O2 = pyridoxal 5'-phosphate + H2O2. It participates in cofactor metabolism; pyridoxal 5'-phosphate salvage; pyridoxal 5'-phosphate from pyridoxamine 5'-phosphate: step 1/1. It functions in the pathway cofactor metabolism; pyridoxal 5'-phosphate salvage; pyridoxal 5'-phosphate from pyridoxine 5'-phosphate: step 1/1. In terms of biological role, catalyzes the oxidation of either pyridoxine 5'-phosphate (PNP) or pyridoxamine 5'-phosphate (PMP) into pyridoxal 5'-phosphate (PLP). The protein is Pyridoxine/pyridoxamine 5'-phosphate oxidase of Rhizobium johnstonii (strain DSM 114642 / LMG 32736 / 3841) (Rhizobium leguminosarum bv. viciae).